The chain runs to 487 residues: N-succinylglutamate 5-semialdehyde dehydrogenase (487 aa).

Residues 1–23 form a disordered region; that stretch reads MTHFIKGQWQAGKGHDVTSSNPA. 220 to 225 provides a ligand contact to NAD(+); the sequence is GSSRTG. Residues glutamate 243 and cysteine 277 contribute to the active site.

The protein belongs to the aldehyde dehydrogenase family. AstD subfamily.

The catalysed reaction is N-succinyl-L-glutamate 5-semialdehyde + NAD(+) + H2O = N-succinyl-L-glutamate + NADH + 2 H(+). It functions in the pathway amino-acid degradation; L-arginine degradation via AST pathway; L-glutamate and succinate from L-arginine: step 4/5. In terms of biological role, catalyzes the NAD-dependent reduction of succinylglutamate semialdehyde into succinylglutamate. The polypeptide is N-succinylglutamate 5-semialdehyde dehydrogenase (Shewanella sp. (strain ANA-3)).